Reading from the N-terminus, the 183-residue chain is Large ribosomal subunit protein eL18 (183 aa).

Residues 150–183 (RHFGPAPGAPRSHTKPYVRTKGHERARPRRRSNV) form a disordered region. A compositionally biased stretch (basic residues) spans 161–183 (SHTKPYVRTKGHERARPRRRSNV).

It belongs to the eukaryotic ribosomal protein eL18 family.

The protein resides in the cytoplasm. This is Large ribosomal subunit protein eL18 (RpL18) from Spodoptera frugiperda (Fall armyworm).